The following is a 145-amino-acid chain: Chaperonin GroEL (145 aa).

This sequence belongs to the chaperonin (HSP60) family. Forms a cylinder of 14 subunits composed of two heptameric rings stacked back-to-back. Interacts with the co-chaperonin GroES.

The protein resides in the cytoplasm. The enzyme catalyses ATP + H2O + a folded polypeptide = ADP + phosphate + an unfolded polypeptide.. Functionally, together with its co-chaperonin GroES, plays an essential role in assisting protein folding. The GroEL-GroES system forms a nano-cage that allows encapsulation of the non-native substrate proteins and provides a physical environment optimized to promote and accelerate protein folding. This is Chaperonin GroEL from Thermus thermophilus.